The following is a 234-amino-acid chain: MKAIYEGKAKALFETEEAGVLRVYYKDDATAFNGEKKESIDGKGILNNAITTQLFELMHDNKIPTHFIKQISDREQLVRRVDIIPLEVVVRNVAAGSLAKRLGWEEGTPLLAPIVEFYYKDDALGDPLLTEDHIRLLQVATHKEVETLRQLGLWVNDVLLDFFGQHGIDVIDFKLEFGKVDGTIILADEISPDTCRLWDKETKQKLDKDVFRRDLGSLTETYGQLLTRIGGNGQ.

The protein belongs to the SAICAR synthetase family.

It carries out the reaction 5-amino-1-(5-phospho-D-ribosyl)imidazole-4-carboxylate + L-aspartate + ATP = (2S)-2-[5-amino-1-(5-phospho-beta-D-ribosyl)imidazole-4-carboxamido]succinate + ADP + phosphate + 2 H(+). Its pathway is purine metabolism; IMP biosynthesis via de novo pathway; 5-amino-1-(5-phospho-D-ribosyl)imidazole-4-carboxamide from 5-amino-1-(5-phospho-D-ribosyl)imidazole-4-carboxylate: step 1/2. In Exiguobacterium sp. (strain ATCC BAA-1283 / AT1b), this protein is Phosphoribosylaminoimidazole-succinocarboxamide synthase.